Reading from the N-terminus, the 276-residue chain is Phosphatidylcholine synthase (276 aa).

Residues 1 to 30 lie on the Cytoplasmic side of the membrane; the sequence is MGGQKEMADSVKTKLTGKLKAKKVTAPQAK. A helical membrane pass occupies residues 31 to 51; that stretch reads AFSVHLLTASGSFLAFLSVVA. Over 52-57 the chain is Periplasmic; it reads ASDGRY. A helical transmembrane segment spans residues 58 to 78; it reads TAMWWWLGLALFVDGIDGPIA. Over 79 to 91 the chain is Cytoplasmic; it reads RKLEVKYVLPNWS. The helical transmembrane segment at 92-112 threads the bilayer; it reads GELLDSIIDYVTYVLIPAFAL. Residues 113 to 115 lie on the Periplasmic side of the membrane; the sequence is YQS. The helical transmembrane segment at 116–136 threads the bilayer; it reads GFMGTNLSFISGAIIVVSSAI. Residues 137-146 are Cytoplasmic-facing; it reads YYADTGMKTK. The helical transmembrane segment at 147–167 threads the bilayer; the sequence is ENFFKGFPVVWNMVVFTLFIV. Topologically, residues 168-171 are periplasmic; sequence RPGE. Residues 172 to 192 traverse the membrane as a helical segment; the sequence is WVAFGTVVASAILSFLPINFL. Topologically, residues 193-202 are cytoplasmic; that stretch reads HPVRVVRLRP. The chain crosses the membrane as a helical span at residues 203–223; the sequence is LNLTIFLLWCAFGVIALYYML. Over 224-230 the chain is Periplasmic; the sequence is DAPLWVR. Residues 231–251 form a helical membrane-spanning segment; sequence IGISVTGLYIYFIGAIMQLFP. Residues 252–276 are Cytoplasmic-facing; that stretch reads SLGREAALAKARKLVEKQQKSGEAP.

The protein belongs to the CDP-alcohol phosphatidyltransferase class-I family. Requires Mn(2+) as cofactor.

The protein localises to the cell inner membrane. The enzyme catalyses a CDP-1,2-diacyl-sn-glycerol + choline = a 1,2-diacyl-sn-glycero-3-phosphocholine + CMP + H(+). Functionally, condenses choline with CDP-diglyceride to produce phosphatidylcholine and CMP. In Brucella melitensis biotype 1 (strain ATCC 23456 / CCUG 17765 / NCTC 10094 / 16M), this protein is Phosphatidylcholine synthase.